The following is a 572-amino-acid chain: 2-isopropylmalate synthase (572 aa).

A Pyruvate carboxyltransferase domain is found at 31 to 305 (PIWMSTDLRD…DPGLDFSNIN (275 aa)). Residues Asp-40, His-244, His-246, and Asn-280 each coordinate Mg(2+). Residues 437–572 (NATPVHYVGH…MNDATESVGV (136 aa)) form a regulatory domain region.

This sequence belongs to the alpha-IPM synthase/homocitrate synthase family. LeuA type 2 subfamily. In terms of assembly, homodimer. The cofactor is Mg(2+).

The protein resides in the cytoplasm. It carries out the reaction 3-methyl-2-oxobutanoate + acetyl-CoA + H2O = (2S)-2-isopropylmalate + CoA + H(+). It functions in the pathway amino-acid biosynthesis; L-leucine biosynthesis; L-leucine from 3-methyl-2-oxobutanoate: step 1/4. Functionally, catalyzes the condensation of the acetyl group of acetyl-CoA with 3-methyl-2-oxobutanoate (2-ketoisovalerate) to form 3-carboxy-3-hydroxy-4-methylpentanoate (2-isopropylmalate). The protein is 2-isopropylmalate synthase of Paraburkholderia xenovorans (strain LB400).